The sequence spans 453 residues: Macrophage scavenger receptor types I and II (453 aa).

Over 1–50 (MAQWDDFPDQQEDTDSCTESVKFDARSVTALLPPHPKNGPTLQERMKSYK) the chain is Cytoplasmic. A Phosphoserine modification is found at Ser27. Residues 51-76 (TALITLYLIVFVVLVPIIGIVAAQLL) traverse the membrane as a helical; Signal-anchor for type II membrane protein segment. Positions 77-108 (KWETKNCTVGSVNADISPSPEGKGNGSEDEMR) are spacer. The Extracellular segment spans residues 77-453 (KWETKNCTVG…DEDAGVTCTT (377 aa)). N-linked (GlcNAc...) asparagine glycans are attached at residues Asn82, Asn101, Asn142, Asn183, Asn220, Asn248, and Asn266. The stretch at 194–255 (ETLNGRVQEN…LNNITNDLRL (62 aa)) forms a coiled coil. 2 disordered regions span residues 267 to 295 (ITLL…PGFP) and 313 to 349 (PGVR…QRQS). The region spanning 272–343 (GPPGPPGEKG…KGQKGEKGSG (72 aa)) is the Collagen-like domain. Positions 352–452 (VRLVGGSGPH…HDEDAGVTCT (101 aa)) constitute an SRCR domain. 3 cysteine pairs are disulfide-bonded: Cys377–Cys441, Cys390–Cys451, and Cys421–Cys431.

Homotrimer. Interacts with MYO18A.

It is found in the membrane. Membrane glycoproteins implicated in the pathologic deposition of cholesterol in arterial walls during atherogenesis. Two types of receptor subunits exist. These receptors mediate the endocytosis of a diverse group of macromolecules, including modified low density lipoproteins (LDL). The protein is Macrophage scavenger receptor types I and II (MSR1) of Bos taurus (Bovine).